Consider the following 188-residue polypeptide: Epididymal-specific lipocalin-5 (188 aa).

The first 19 residues, 1–19, serve as a signal peptide directing secretion; sequence MENIMPFALLGLCVGLAAG. C82 and C176 form a disulfide bridge.

Belongs to the calycin superfamily. Lipocalin family. Post-translationally, there are two similar, immunologically cross-reacting forms of this protein, designated B and C, which probably result from different processing of the amino end. In terms of processing, the N-terminus of form C is probably blocked. In terms of tissue distribution, synthesized exclusively in the proximal part (caput epididymidis) of the epididymis. It makes up a substantial part of the total protein in the epididymal luminal fluid and binds to the sperm membrane.

Its subcellular location is the secreted. Associates with spermatozoa in the epididymal fluid but does not bind tightly to them. Binds both all-trans and 9-cis retinoic acid. May act as a retinoid carrier protein which is required for epididymal function and/or sperm maturation. The protein is Epididymal-specific lipocalin-5 (Lcn5) of Rattus norvegicus (Rat).